Here is a 391-residue protein sequence, read N- to C-terminus: Formate-dependent phosphoribosylglycinamide formyltransferase (391 aa).

N(1)-(5-phospho-beta-D-ribosyl)glycinamide contacts are provided by residues 18-19 (EL) and Glu-78. ATP contacts are provided by residues Arg-110, Lys-151, 156–161 (SSGKGQ), 191–194 (EEFI), and Glu-199. Residues 115-305 (ELAHEELGIR…EFELHLRAIL (191 aa)) form the ATP-grasp domain. The Mg(2+) site is built by Glu-264 and Glu-276. N(1)-(5-phospho-beta-D-ribosyl)glycinamide is bound by residues Asp-283, Lys-353, and 360-361 (RR).

Belongs to the PurK/PurT family. Homodimer.

The enzyme catalyses N(1)-(5-phospho-beta-D-ribosyl)glycinamide + formate + ATP = N(2)-formyl-N(1)-(5-phospho-beta-D-ribosyl)glycinamide + ADP + phosphate + H(+). The protein operates within purine metabolism; IMP biosynthesis via de novo pathway; N(2)-formyl-N(1)-(5-phospho-D-ribosyl)glycinamide from N(1)-(5-phospho-D-ribosyl)glycinamide (formate route): step 1/1. In terms of biological role, involved in the de novo purine biosynthesis. Catalyzes the transfer of formate to 5-phospho-ribosyl-glycinamide (GAR), producing 5-phospho-ribosyl-N-formylglycinamide (FGAR). Formate is provided by PurU via hydrolysis of 10-formyl-tetrahydrofolate. This is Formate-dependent phosphoribosylglycinamide formyltransferase from Nostoc sp. (strain PCC 7120 / SAG 25.82 / UTEX 2576).